Consider the following 136-residue polypeptide: Large ribosomal subunit protein uL16 (136 aa).

This sequence belongs to the universal ribosomal protein uL16 family. As to quaternary structure, part of the 50S ribosomal subunit.

Binds 23S rRNA and is also seen to make contacts with the A and possibly P site tRNAs. This Shigella flexneri protein is Large ribosomal subunit protein uL16.